We begin with the raw amino-acid sequence, 222 residues long: MTQDELKKAAALAALDYVEDGMIVGVGTGSTVNHFIDGLAGIKHRIRGAVSSSEASSKRLAAHGIALLDLNDVDELPVYIDGADEIDHGFAMIKGGGGALTREKIVAAVARRFVCICDESKRVDVLGRFPLPIEVIPMARSQVMRAAAALGATPRLREGFVTDNGNLIIDLHGLSITDPCATEQALNAVVGVVTNGLFAARGADTLLLASAQGVRRFERSAT.

Residues 28 to 31 (TGST), 81 to 84 (DGAD), and 94 to 97 (KGGG) each bind substrate. Residue glutamate 103 is the Proton acceptor of the active site. Lysine 121 lines the substrate pocket.

This sequence belongs to the ribose 5-phosphate isomerase family. As to quaternary structure, homodimer.

It carries out the reaction aldehydo-D-ribose 5-phosphate = D-ribulose 5-phosphate. Its pathway is carbohydrate degradation; pentose phosphate pathway; D-ribose 5-phosphate from D-ribulose 5-phosphate (non-oxidative stage): step 1/1. Functionally, catalyzes the reversible conversion of ribose-5-phosphate to ribulose 5-phosphate. In Azoarcus sp. (strain BH72), this protein is Ribose-5-phosphate isomerase A.